A 524-amino-acid chain; its full sequence is CDC50-related protein CDC50.1 (524 aa).

Composition is skewed to polar residues over residues 1-19 (MGENSTTGLRGQADVSQFS) and 26-39 (TLSSPPTGQRQQSL). Disordered stretches follow at residues 1-40 (MGENSTTGLRGQADVSQFSDAAVEPTLSSPPTGQRQQSLP) and 52-86 (APSVGGGGGWPFQRQGSSRLTSRGTSLSSCSDAGS). The Cytoplasmic segment spans residues 1–181 (MGENSTTGLR…GMYPLWSAGV (181 aa)). Over residues 67–80 (GSSRLTSRGTSLSS) the composition is skewed to low complexity. A helical transmembrane segment spans residues 182–202 (VLRLCLLGALFFVSVGAWLIF). The Extracellular portion of the chain corresponds to 203–473 (EDEQHVECKL…VQKSRLGGRS (271 aa)). 2 N-linked (GlcNAc...) asparagine glycosylation sites follow: Asn297 and Asn339. The chain crosses the membrane as a helical span at residues 474–494 (LFIGIAYLSFGCLLTMLVFYM). Residues 495–524 (LWKKWQYRREGEEIRDLRWQTKTRGSKKTK) lie on the Cytoplasmic side of the membrane.

Belongs to the CDC50/LEM3 family. As to quaternary structure, interacts with GC; the interaction regulates guanylate cyclase GC trafficking and sensing environmental changes.

Its subcellular location is the membrane. Functionally, in tachyzoites, required for the cellular trafficking of guanylate cyclase GC and UGO to the cell membrane. May play a role in the folding of the GC P-type ATPase-like domain to sense vacuolar changes in phosphatidic acid and pH levels which trigger parasite egress. This is CDC50-related protein CDC50.1 from Toxoplasma gondii (strain ATCC 50853 / GT1).